The chain runs to 299 residues: Putative peptidyl-prolyl cis-trans isomerase HP_0175 (299 aa).

The N-terminal stretch at 1-21 (MKKNILNLALVGALSTSFLMA) is a signal peptide. A PpiC domain is found at 154 to 253 (KQEAHARHIL…FGYHIIYLIS (100 aa)).

The enzyme catalyses [protein]-peptidylproline (omega=180) = [protein]-peptidylproline (omega=0). This is Putative peptidyl-prolyl cis-trans isomerase HP_0175 from Helicobacter pylori (strain ATCC 700392 / 26695) (Campylobacter pylori).